Here is a 400-residue protein sequence, read N- to C-terminus: CCA-adding enzyme (400 aa).

Gly28 and Arg31 together coordinate ATP. Residues Gly28 and Arg31 each contribute to the CTP site. Residues Asp41 and Asp43 each contribute to the Mg(2+) site. Positions 112, 155, 158, 161, and 164 each coordinate ATP. Arg112, Asp155, Arg158, Arg161, and Arg164 together coordinate CTP.

Belongs to the tRNA nucleotidyltransferase/poly(A) polymerase family. Bacterial CCA-adding enzyme type 3 subfamily. Homodimer. Requires Mg(2+) as cofactor.

It catalyses the reaction a tRNA precursor + 2 CTP + ATP = a tRNA with a 3' CCA end + 3 diphosphate. The catalysed reaction is a tRNA with a 3' CCA end + 2 CTP + ATP = a tRNA with a 3' CCACCA end + 3 diphosphate. Its function is as follows. Catalyzes the addition and repair of the essential 3'-terminal CCA sequence in tRNAs without using a nucleic acid template. Adds these three nucleotides in the order of C, C, and A to the tRNA nucleotide-73, using CTP and ATP as substrates and producing inorganic pyrophosphate. tRNA 3'-terminal CCA addition is required both for tRNA processing and repair. Also involved in tRNA surveillance by mediating tandem CCA addition to generate a CCACCA at the 3' terminus of unstable tRNAs. While stable tRNAs receive only 3'-terminal CCA, unstable tRNAs are marked with CCACCA and rapidly degraded. The sequence is that of CCA-adding enzyme from Staphylococcus epidermidis (strain ATCC 12228 / FDA PCI 1200).